The following is a 386-amino-acid chain: HORMA domain-containing protein 1 (386 aa).

The HORMA domain occupies Thr-24 to Val-224. 2 disordered regions span residues Ser-237–Asp-274 and Glu-289–Asn-386. Residues Glu-289–Ala-313 are compositionally biased toward polar residues. A compositionally biased stretch (basic and acidic residues) spans Gln-329–Arg-343.

The protein localises to the nucleus. It localises to the chromosome. Its function is as follows. Plays a key role in meiotic progression by ensuring that sufficient numbers of processed DNA double-strand breaks (DSBs) are available for successful homology search, promoting synaptonemal-complex formation independently and playing key role in the male mid-pachytene checkpoint and the female meiotic prophase checkpoint. The polypeptide is HORMA domain-containing protein 1 (hormad1) (Xenopus laevis (African clawed frog)).